Here is a 374-residue protein sequence, read N- to C-terminus: SKP1-interacting partner 15 (374 aa).

The region spanning 3–48 (SSPVNCLPPDSLHQIFSSLPIRDIMICRSVCKFFNQLLTSQCFIEI) is the F-box domain.

In terms of assembly, part of a SCF (ASK-cullin-F-box) protein ligase complex. Interacts with SKP1A/ASK1, SKP1B/ASK2, ASK11 and ASK13.

It is found in the nucleus. It functions in the pathway protein modification; protein ubiquitination. Component of SCF(ASK-cullin-F-box) E3 ubiquitin ligase complexes, which may mediate the ubiquitination and subsequent proteasomal degradation of target proteins. The protein is SKP1-interacting partner 15 (SKIP15) of Arabidopsis thaliana (Mouse-ear cress).